Here is a 39-residue protein sequence, read N- to C-terminus: Potassium channel toxin alpha-KTx 2.2 (39 aa).

Disulfide bonds link C7–C29, C13–C34, and C17–C36. Positions 37–39 (YPH) are interaction with Kv1.3 channels.

This sequence belongs to the short scorpion toxin superfamily. Potassium channel inhibitor family. Alpha-KTx 02 subfamily. As to expression, expressed by the venom gland.

The protein resides in the secreted. In terms of biological role, potent inhibitor of voltage-gated potassium channels such as Kv1.1/KCNA1 (IC(50)=0.144 nM), Kv1.2/KCNA2 (IC(50)=0.675 nM), Kv1.3/KCNA3 (IC(50)=0.23 nM) and Shaker (Kd=160 nM). Suppresses expression of the Kv1.3/KCNA3 channel in lipopolysaccharide (LPS)-stimulated mouse macrophages. Down-regulates secretion of nitric oxide (NO) and inflammatory cytokines, such as TNF-alpha/TNF, IL-1beta/IL1B and IL6, in LPS-stimulated mouse macrophages in a manner dependent on Kv1.3/KCNA3 channel blockage. Reduces activation of MAPK and NF-kappa-B signaling pathways in LPS-stimulated mouse macrophages. Modulates intracellular Ca(2+) signaling in human PMA/ionomycin-triggered T-cells. Interferes with the activation of the MAPK, NF-kappa-B and NFATc1 pathways in human PMA/ionomycin-triggered T-cells. Reduces proliferation of human PMA/ionomycin-triggered T-cells. Down-regulates secretion of cytokines, such as TNF-alpha/TNF and IL2, in human PMA/ionomycin-triggered T-cells. This chain is Potassium channel toxin alpha-KTx 2.2, found in Centruroides margaritatus (Central American bark Scorpion).